The primary structure comprises 501 residues: MTPGALLMLLGALGAPLAPGVRGSEAEGRLREKLFSGYDSSVRPAREVGDRVRVSVGLILAQLISLNEKDEEMSTKVYLDLEWTDYRLSWDPAEHDGIDSLRITAESVWLPDVVLLNNNDGNFDVALDISVVVSSDGSVRWQPPGIYRSSCSIQVTYFPFDWQNCTMVFSSYSYDSSEVSLQTGLGPDGQGHQEIHIHEGTFIENGQWEIIHKPSRLIQPPGDPRGGREGQRQEVIFYLIIRRKPLFYLVNVIAPCILITLLAIFVFYLPPDAGEKMGLSIFALLTLTVFLLLLADKVPETSLSVPIIIKYLMFTMVLVTFSVILSVVVLNLHHRSPHTHQMPLWVRQIFIHKLPLYLRLKRPKPERDLMPEPPHCSSPGSGWGRGTDEYFIRKPPSDFLFPKPNRFQPELSAPDLRRFIDGPNRAVALLPELREVVSSISYIARQLQEQEDHDALKEDWQFVAMVVDRLFLWTFIIFTSVGTLVIFLDATYHLPPPDPFP.

The first 23 residues, 1–23, serve as a signal peptide directing secretion; that stretch reads MTPGALLMLLGALGAPLAPGVRG. The Extracellular portion of the chain corresponds to 24–244; it reads SEAEGRLREK…VIFYLIIRRK (221 aa). Cys-151 and Cys-165 are joined by a disulfide. The N-linked (GlcNAc...) asparagine glycan is linked to Asn-164. Transmembrane regions (helical) follow at residues 245 to 269, 277 to 295, and 311 to 332; these read PLFY…VFYL, MGLS…LLLA, and YLMF…VLNL. Residues 333-469 are Cytoplasmic-facing; that stretch reads HHRSPHTHQM…WQFVAMVVDR (137 aa). Phosphotyrosine; by Tyr-kinases is present on Tyr-390. A helical membrane pass occupies residues 470–488; sequence LFLWTFIIFTSVGTLVIFL.

Belongs to the ligand-gated ion channel (TC 1.A.9) family. Acetylcholine receptor (TC 1.A.9.1) subfamily. Beta-1/CHRNB1 sub-subfamily. Pentamer of two alpha chains, and one each of the beta, delta, and gamma (in immature muscle) or epsilon (in mature muscle) chains. The muscle heteropentamer composed of alpha-1, beta-1, delta, epsilon subunits interacts with the alpha-conotoxin ImII.

Its subcellular location is the postsynaptic cell membrane. The protein localises to the cell membrane. The enzyme catalyses K(+)(in) = K(+)(out). It carries out the reaction Na(+)(in) = Na(+)(out). Functionally, after binding acetylcholine, the AChR responds by an extensive change in conformation that affects all subunits and leads to opening of an ion-conducting channel across the plasma membrane. This Homo sapiens (Human) protein is Acetylcholine receptor subunit beta.